The primary structure comprises 248 residues: MFLFLIFLVAVLPVNTEGGEIVWGTESKPHSRPYMASLMFYYGNSYRHYCGGFLVAKDIVMTAAHCNESNIKVILGAHNIKKRENTQVFSVVKAKPHENYDSHSLFNDIMLLKLERKAQLNGVVKTIALPRSQDWVKPGQVCTVAGWGRLANCTLSNTLQEVNLEVQKGQKCQGMSEDYNDSIQLCVGNPSEGKATGKGDSGGPFVCDGVAQGIVSRRLCTGTLPRVFTRISTFIPWIQKTMKLLQQP.

An N-terminal signal peptide occupies residues 1–18; the sequence is MFLFLIFLVAVLPVNTEG. Residues 19–20 constitute a propeptide, activation peptide; that stretch reads GE. Positions 21–243 constitute a Peptidase S1 domain; sequence IVWGTESKPH…FIPWIQKTMK (223 aa). The cysteines at positions 50 and 66 are disulfide-linked. Residues His-65 and Asp-108 each act as charge relay system in the active site. Disulfide bonds link Cys-142–Cys-207 and Cys-172–Cys-186. N-linked (GlcNAc...) asparagine glycans are attached at residues Asn-152 and Asn-180. The Charge relay system role is filled by Ser-201.

The protein belongs to the peptidase S1 family. Granzyme subfamily. As to expression, duodenum, lung and spleen.

In terms of biological role, this enzyme is necessary for target cell lysis in cell-mediated immune responses. This Rattus norvegicus (Rat) protein is Granzyme-like protein 2.